Consider the following 172-residue polypeptide: NAD(P)H-quinone oxidoreductase subunit I, chloroplastic (172 aa).

4Fe-4S ferredoxin-type domains lie at 55–84 and 95–124; these read GRIHFEFDKCIACEVCVRVCPIDLPVVDWK and LNYSIDFGICIFCGNCVEYCPTNCLSMTEE. Cysteine 64, cysteine 67, cysteine 70, cysteine 74, cysteine 104, cysteine 107, cysteine 110, and cysteine 114 together coordinate [4Fe-4S] cluster.

This sequence belongs to the complex I 23 kDa subunit family. In terms of assembly, NDH is composed of at least 16 different subunits, 5 of which are encoded in the nucleus. [4Fe-4S] cluster serves as cofactor.

The protein localises to the plastid. It is found in the chloroplast thylakoid membrane. The enzyme catalyses a plastoquinone + NADH + (n+1) H(+)(in) = a plastoquinol + NAD(+) + n H(+)(out). It catalyses the reaction a plastoquinone + NADPH + (n+1) H(+)(in) = a plastoquinol + NADP(+) + n H(+)(out). Functionally, NDH shuttles electrons from NAD(P)H:plastoquinone, via FMN and iron-sulfur (Fe-S) centers, to quinones in the photosynthetic chain and possibly in a chloroplast respiratory chain. The immediate electron acceptor for the enzyme in this species is believed to be plastoquinone. Couples the redox reaction to proton translocation, and thus conserves the redox energy in a proton gradient. The sequence is that of NAD(P)H-quinone oxidoreductase subunit I, chloroplastic from Arabidopsis thaliana (Mouse-ear cress).